We begin with the raw amino-acid sequence, 380 residues long: Cytoplasmic protein NCK2 (380 aa).

Threonine 2 bears the N-acetylthreonine mark. Residues 2–61 (TEEVIVIAKWDYTAQQDQELDIKKNERLWLLDDSKTWWRVRNAANRTGYVPSNYVERKNS) form the SH3 1 domain. The disordered stretch occupies residues 79-102 (KTRRKTSARDASPTPSTDAEYPAN). Serine 90 carries the phosphoserine modification. The residue at position 92 (threonine 92) is a Phosphothreonine. At serine 94 the chain carries Phosphoserine. Tyrosine 110 is subject to Phosphotyrosine. SH3 domains are found at residues 111–170 (DLNI…EEVD) and 195–257 (RVLH…VLSD). Positions 285–380 (WYYGNVTRHQ…EKLYLVRALQ (96 aa)) constitute an SH2 domain.

As to quaternary structure, interacts with DOCK1, LIMS1 and TGFB1I1. Part of a complex containing PPP1R15B, PP1 and NCK2. Interacts with FASLG. Interacts with AXL. Interacts with PAK1, PKN2 and SOS1. Interacts (via SH2 domain) with EGFR. Interacts (via SH2 domain) with DDR1. Interacts with IRS1. In terms of processing, phosphorylated. In terms of tissue distribution, ubiquitous.

The protein resides in the cytoplasm. It is found in the endoplasmic reticulum. Its function is as follows. Adapter protein which associates with tyrosine-phosphorylated growth factor receptors or their cellular substrates. Maintains low levels of EIF2S1 phosphorylation by promoting its dephosphorylation by PP1. Plays a role in ELK1-dependent transcriptional activation in response to activated Ras signaling. This is Cytoplasmic protein NCK2 (NCK2) from Homo sapiens (Human).